Here is a 689-residue protein sequence, read N- to C-terminus: Glycine--tRNA ligase beta subunit (689 aa).

This sequence belongs to the class-II aminoacyl-tRNA synthetase family. In terms of assembly, tetramer of two alpha and two beta subunits.

It is found in the cytoplasm. It carries out the reaction tRNA(Gly) + glycine + ATP = glycyl-tRNA(Gly) + AMP + diphosphate. This Sodalis glossinidius (strain morsitans) protein is Glycine--tRNA ligase beta subunit.